Consider the following 227-residue polypeptide: Cytochrome c oxidase subunit 2 (227 aa).

At 1–14 (MAYPFQLGFQDATS) the chain is on the mitochondrial intermembrane side. A helical transmembrane segment spans residues 15–45 (PIMEELLHFHDHALMIVFLISSLVLYLISVM). The Mitochondrial matrix segment spans residues 46-59 (LTTSLTHTSTMDAQ). A helical membrane pass occupies residues 60-87 (EVETIWTILPAMILIMIALPSLRILYMM). At 88–227 (DEINNPYLTV…YFEKWSSSML (140 aa)) the chain is on the mitochondrial intermembrane side. Histidine 161, cysteine 196, glutamate 198, cysteine 200, histidine 204, and methionine 207 together coordinate Cu cation. Glutamate 198 contributes to the Mg(2+) binding site. Residue tyrosine 218 is modified to Phosphotyrosine.

The protein belongs to the cytochrome c oxidase subunit 2 family. Component of the cytochrome c oxidase (complex IV, CIV), a multisubunit enzyme composed of 14 subunits. The complex is composed of a catalytic core of 3 subunits MT-CO1, MT-CO2 and MT-CO3, encoded in the mitochondrial DNA, and 11 supernumerary subunits COX4I, COX5A, COX5B, COX6A, COX6B, COX6C, COX7A, COX7B, COX7C, COX8 and NDUFA4, which are encoded in the nuclear genome. The complex exists as a monomer or a dimer and forms supercomplexes (SCs) in the inner mitochondrial membrane with NADH-ubiquinone oxidoreductase (complex I, CI) and ubiquinol-cytochrome c oxidoreductase (cytochrome b-c1 complex, complex III, CIII), resulting in different assemblies (supercomplex SCI(1)III(2)IV(1) and megacomplex MCI(2)III(2)IV(2)). Found in a complex with TMEM177, COA6, COX18, COX20, SCO1 and SCO2. Interacts with TMEM177 in a COX20-dependent manner. Interacts with COX20. Interacts with COX16. It depends on Cu cation as a cofactor.

The protein resides in the mitochondrion inner membrane. It carries out the reaction 4 Fe(II)-[cytochrome c] + O2 + 8 H(+)(in) = 4 Fe(III)-[cytochrome c] + 2 H2O + 4 H(+)(out). Component of the cytochrome c oxidase, the last enzyme in the mitochondrial electron transport chain which drives oxidative phosphorylation. The respiratory chain contains 3 multisubunit complexes succinate dehydrogenase (complex II, CII), ubiquinol-cytochrome c oxidoreductase (cytochrome b-c1 complex, complex III, CIII) and cytochrome c oxidase (complex IV, CIV), that cooperate to transfer electrons derived from NADH and succinate to molecular oxygen, creating an electrochemical gradient over the inner membrane that drives transmembrane transport and the ATP synthase. Cytochrome c oxidase is the component of the respiratory chain that catalyzes the reduction of oxygen to water. Electrons originating from reduced cytochrome c in the intermembrane space (IMS) are transferred via the dinuclear copper A center (CU(A)) of subunit 2 and heme A of subunit 1 to the active site in subunit 1, a binuclear center (BNC) formed by heme A3 and copper B (CU(B)). The BNC reduces molecular oxygen to 2 water molecules using 4 electrons from cytochrome c in the IMS and 4 protons from the mitochondrial matrix. In Rousettus leschenaultii (Leschenault's rousette), this protein is Cytochrome c oxidase subunit 2 (MT-CO2).